Reading from the N-terminus, the 344-residue chain is Glycerol-3-phosphate dehydrogenase [NAD(P)+] (344 aa).

The NADPH site is built by serine 18, tyrosine 19, histidine 39, and lysine 113. Residues lysine 113, glycine 142, and threonine 144 each contribute to the sn-glycerol 3-phosphate site. Alanine 146 contributes to the NADPH binding site. Sn-glycerol 3-phosphate contacts are provided by lysine 198, aspartate 251, serine 261, arginine 262, and asparagine 263. The active-site Proton acceptor is lysine 198. Arginine 262 is an NADPH binding site. Residues isoleucine 286 and glutamate 288 each contribute to the NADPH site.

Belongs to the NAD-dependent glycerol-3-phosphate dehydrogenase family.

It localises to the cytoplasm. The enzyme catalyses sn-glycerol 3-phosphate + NAD(+) = dihydroxyacetone phosphate + NADH + H(+). The catalysed reaction is sn-glycerol 3-phosphate + NADP(+) = dihydroxyacetone phosphate + NADPH + H(+). Its pathway is membrane lipid metabolism; glycerophospholipid metabolism. In terms of biological role, catalyzes the reduction of the glycolytic intermediate dihydroxyacetone phosphate (DHAP) to sn-glycerol 3-phosphate (G3P), the key precursor for phospholipid synthesis. In Blochmanniella pennsylvanica (strain BPEN), this protein is Glycerol-3-phosphate dehydrogenase [NAD(P)+].